A 274-amino-acid chain; its full sequence is UPF0173 metal-dependent hydrolase Adeh_1068 (274 aa).

It belongs to the UPF0173 family.

This Anaeromyxobacter dehalogenans (strain 2CP-C) protein is UPF0173 metal-dependent hydrolase Adeh_1068.